We begin with the raw amino-acid sequence, 498 residues long: ATP synthase subunit beta, chloroplastic (498 aa).

Over residues 1–14 the composition is skewed to polar residues; sequence MRTNPTTSRPGVST. The tract at residues 1 to 20 is disordered; the sequence is MRTNPTTSRPGVSTSEEKST. An ATP-binding site is contributed by 172 to 179; the sequence is GGAGVGKT.

The protein belongs to the ATPase alpha/beta chains family. In terms of assembly, F-type ATPases have 2 components, CF(1) - the catalytic core - and CF(0) - the membrane proton channel. CF(1) has five subunits: alpha(3), beta(3), gamma(1), delta(1), epsilon(1). CF(0) has four main subunits: a(1), b(1), b'(1) and c(9-12).

The protein localises to the plastid. The protein resides in the chloroplast thylakoid membrane. The catalysed reaction is ATP + H2O + 4 H(+)(in) = ADP + phosphate + 5 H(+)(out). In terms of biological role, produces ATP from ADP in the presence of a proton gradient across the membrane. The catalytic sites are hosted primarily by the beta subunits. This chain is ATP synthase subunit beta, chloroplastic, found in Hordeum vulgare (Barley).